A 311-amino-acid chain; its full sequence is Pyrimidine-specific ribonucleoside hydrolase RihA (311 aa).

The active site involves histidine 240.

Belongs to the IUNH family. RihA subfamily.

Hydrolyzes cytidine or uridine to ribose and cytosine or uracil, respectively. The chain is Pyrimidine-specific ribonucleoside hydrolase RihA from Shigella flexneri serotype 5b (strain 8401).